Reading from the N-terminus, the 463-residue chain is Hydroxyacid-oxoacid transhydrogenase, mitochondrial (463 aa).

It belongs to the iron-containing alcohol dehydrogenase family. Hydroxyacid-oxoacid transhydrogenase subfamily.

It localises to the mitochondrion. The catalysed reaction is (S)-3-hydroxybutanoate + 2-oxoglutarate = (R)-2-hydroxyglutarate + acetoacetate. It catalyses the reaction 4-hydroxybutanoate + 2-oxoglutarate = (R)-2-hydroxyglutarate + succinate semialdehyde. Catalyzes the cofactor-independent reversible oxidation of gamma-hydroxybutyrate (GHB) to succinic semialdehyde (SSA) coupled to reduction of 2-ketoglutarate (2-KG) to D-2-hydroxyglutarate (D-2-HG). L-3-hydroxybutyrate (L-3-OHB) is also a substrate for HOT when using 2-KG as hydrogen acceptor, resulting in the formation of D-2-HG. The sequence is that of Hydroxyacid-oxoacid transhydrogenase, mitochondrial (adhfe1) from Xenopus laevis (African clawed frog).